The chain runs to 451 residues: Adenylyltransferase and sulfurtransferase MOCS3 (451 aa).

The tract at residues 42 to 62 (GEDSDEAEESSNDMPTPQTKL) is disordered. Positions 43–52 (EDSDEAEESS) are enriched in acidic residues. T60 carries the post-translational modification Phosphothreonine. ATP-binding positions include G99, D120, 127-131 (SNLHR), K144, and 188-189 (DN). Residues C229 and C232 each coordinate Zn(2+). C246 (glycyl thioester intermediate; for adenylyltransferase activity) is an active-site residue. 2 residues coordinate Zn(2+): C304 and C307. In terms of domain architecture, Rhodanese spans 353–449 (QSQPHLLLDV…WTGSVDATFP (97 aa)). Residue C408 is the Cysteine persulfide intermediate; for sulfurtransferase activity of the active site.

The protein in the N-terminal section; belongs to the HesA/MoeB/ThiF family. UBA4 subfamily. Requires Zn(2+) as cofactor.

Its subcellular location is the cytoplasm. It is found in the cytosol. It carries out the reaction [molybdopterin-synthase sulfur-carrier protein]-C-terminal Gly-Gly + ATP + H(+) = [molybdopterin-synthase sulfur-carrier protein]-C-terminal Gly-Gly-AMP + diphosphate. It catalyses the reaction [molybdopterin-synthase sulfur-carrier protein]-C-terminal Gly-Gly-AMP + S-sulfanyl-L-cysteinyl-[cysteine desulfurase] + AH2 = [molybdopterin-synthase sulfur-carrier protein]-C-terminal-Gly-aminoethanethioate + L-cysteinyl-[cysteine desulfurase] + A + AMP + 2 H(+). The protein operates within tRNA modification; 5-methoxycarbonylmethyl-2-thiouridine-tRNA biosynthesis. It participates in cofactor biosynthesis; molybdopterin biosynthesis. Its function is as follows. Plays a central role in 2-thiolation of mcm(5)S(2)U at tRNA wobble positions of cytosolic tRNA(Lys), tRNA(Glu) and tRNA(Gln). Also essential during biosynthesis of the molybdenum cofactor. Acts by mediating the C-terminal thiocarboxylation of sulfur carriers URM1 and MOCS2A. Its N-terminus first activates URM1 and MOCS2A as acyl-adenylates (-COAMP), then the persulfide sulfur on the catalytic cysteine is transferred to URM1 and MOCS2A to form thiocarboxylation (-COSH) of their C-terminus. The reaction probably involves hydrogen sulfide that is generated from the persulfide intermediate and that acts as a nucleophile towards URM1 and MOCS2A. Subsequently, a transient disulfide bond is formed. Does not use thiosulfate as sulfur donor; NFS1 probably acting as a sulfur donor for thiocarboxylation reactions. This is Adenylyltransferase and sulfurtransferase MOCS3 from Drosophila persimilis (Fruit fly).